The chain runs to 307 residues: Small ribosomal subunit biogenesis GTPase RsgA (307 aa).

In terms of domain architecture, CP-type G spans Lys-80 to Phe-237. GTP is bound by residues Asn-129–Asp-132 and Gly-180–Ser-188. 4 residues coordinate Zn(2+): Cys-261, Cys-266, His-268, and Cys-274.

This sequence belongs to the TRAFAC class YlqF/YawG GTPase family. RsgA subfamily. As to quaternary structure, monomer. Associates with 30S ribosomal subunit, binds 16S rRNA. Zn(2+) is required as a cofactor.

The protein resides in the cytoplasm. Functionally, one of several proteins that assist in the late maturation steps of the functional core of the 30S ribosomal subunit. Helps release RbfA from mature subunits. May play a role in the assembly of ribosomal proteins into the subunit. Circularly permuted GTPase that catalyzes slow GTP hydrolysis, GTPase activity is stimulated by the 30S ribosomal subunit. This chain is Small ribosomal subunit biogenesis GTPase RsgA, found in Borreliella afzelii (strain PKo) (Borrelia afzelii).